Here is a 144-residue protein sequence, read N- to C-terminus: SVVKSEDFSLPAYMDRRDHPLPEVAHVKHLSASQKALKEKEKASWSSLSMDEKVELYRIKFKESFAEMNRGSNEWKTVVGGAMFFIGFTALVIMWQKHYVYGPLPQSFDKEWVAKQTKRMLDMKVNPIQGLASKWDYEKNEWKK.

Over 1–73 (SVVKSEDFSL…SFAEMNRGSN (73 aa)) the chain is Mitochondrial matrix. K4 is subject to N6-acetyllysine; alternate. K4 carries the N6-succinyllysine; alternate modification. K28 carries the post-translational modification N6-acetyllysine. Phosphoserine occurs at positions 31 and 33. The residue at position 35 (K35) is an N6-acetyllysine; alternate. K35 bears the N6-succinyllysine; alternate mark. An N6-acetyllysine modification is found at K42. A helical transmembrane segment spans residues 74-99 (EWKTVVGGAMFFIGFTALVIMWQKHY). Topologically, residues 100–144 (VYGPLPQSFDKEWVAKQTKRMLDMKVNPIQGLASKWDYEKNEWKK) are mitochondrial intermembrane.

It belongs to the cytochrome c oxidase IV family. In terms of assembly, component of the cytochrome c oxidase (complex IV, CIV), a multisubunit enzyme composed of 14 subunits. The complex is composed of a catalytic core of 3 subunits MT-CO1, MT-CO2 and MT-CO3, encoded in the mitochondrial DNA, and 11 supernumerary subunits COX4I, COX5A, COX5B, COX6A, COX6B, COX6C, COX7A, COX7B, COX7C, COX8 and NDUFA4, which are encoded in the nuclear genome. The complex exists as a monomer or a dimer and forms supercomplexes (SCs) in the inner mitochondrial membrane with NADH-ubiquinone oxidoreductase (complex I, CI) and ubiquinol-cytochrome c oxidoreductase (cytochrome b-c1 complex, complex III, CIII), resulting in different assemblies (supercomplex SCI(1)III(2)IV(1) and megacomplex MCI(2)III(2)IV(2)). Interacts with PHB2; the interaction decreases in absence of SPHK2. Interacts with AFG1L. Interacts with ABCB7; this interaction allows the regulation of cellular iron homeostasis and cellular reactive oxygen species (ROS) levels in cardiomyocytes. Interacts with FLVCR2; this interaction occurs in the absence of heme and is disrupted upon heme binding. Interacts with IRGC.

The protein localises to the mitochondrion inner membrane. It participates in energy metabolism; oxidative phosphorylation. Functionally, component of the cytochrome c oxidase, the last enzyme in the mitochondrial electron transport chain which drives oxidative phosphorylation. The respiratory chain contains 3 multisubunit complexes succinate dehydrogenase (complex II, CII), ubiquinol-cytochrome c oxidoreductase (cytochrome b-c1 complex, complex III, CIII) and cytochrome c oxidase (complex IV, CIV), that cooperate to transfer electrons derived from NADH and succinate to molecular oxygen, creating an electrochemical gradient over the inner membrane that drives transmembrane transport and the ATP synthase. Cytochrome c oxidase is the component of the respiratory chain that catalyzes the reduction of oxygen to water. Electrons originating from reduced cytochrome c in the intermembrane space (IMS) are transferred via the dinuclear copper A center (CU(A)) of subunit 2 and heme A of subunit 1 to the active site in subunit 1, a binuclear center (BNC) formed by heme A3 and copper B (CU(B)). The BNC reduces molecular oxygen to 2 water molecules using 4 electrons from cytochrome c in the IMS and 4 protons from the mitochondrial matrix. The protein is Cytochrome c oxidase subunit 4 isoform 1, mitochondrial (COX4I1) of Pan troglodytes (Chimpanzee).